Reading from the N-terminus, the 535-residue chain is Arginine-containing cyclodipeptide synthase anoA (535 aa).

A disordered region spans residues 93 to 114 (LLSPPREPGPIDSETKTREKKS). The span at 105–114 (SETKTREKKS) shows a compositional bias: basic and acidic residues. Residues 424-428 (DDIAE) carry the Conserved DDXXE motif motif.

It belongs to the arginine-containing cyclodipeptide synthase family.

The enzyme catalyses L-tryptophyl-tRNA(Trp) + L-arginyl-tRNA(Arg) = cyclo(L-arginyl-L-tryptophyl) + tRNA(Trp) + tRNA(Arg) + H(+). Its pathway is secondary metabolite biosynthesis. In terms of biological role, arginine-containing cyclodipeptide synthase; part of the cluster that mediates the biosynthesis of a highly modified cyclo-arginine-tryptophan dipeptide (cRW). Within the pathway, AnoA acts as the scaffold-generating enzyme and is responsible for formation of the cyclo-Arg-Trp diketopiperazine (cRW) from L-arginyl-tRNA(Arg) + L-tryptophanyl-tRNA(Trp). Additional enzymes from the cluster then further modify the cyclo-Arg-Asp diketopiperazine (cRW) scaffold. This is Arginine-containing cyclodipeptide synthase anoA from Aspergillus nomiae (Aspergillus nomius).